Consider the following 69-residue polypeptide: Alternative ribosome-rescue factor A (69 aa).

Belongs to the alternative ribosome-rescue factor A family. As to quaternary structure, interacts with the 70S ribosome and release factor 2.

Rescues ribosomes stalled at the 3' end of non-stop mRNAs. Recruits release factor 2 (RF2) to the stalled ribosome, helping position it correctly in the ribosomal A site so its GGQ motif can hydrolyze the peptidyl-tRNA bond. The protein is Alternative ribosome-rescue factor A (arfA) of Haemophilus influenzae (strain ATCC 51907 / DSM 11121 / KW20 / Rd).